Consider the following 245-residue polypeptide: Eukaryotic translation initiation factor 6 (245 aa).

Residue Tyr-113 is modified to Phosphotyrosine. Thr-165 bears the Phosphothreonine mark. Ser-166 is modified (phosphoserine). Phosphoserine; by CK1 occurs at positions 174 and 175. Ser-235 carries the phosphoserine; by PKC modification. Residues Ser-239 and Ser-243 each carry the phosphoserine modification.

Belongs to the eIF-6 family. As to quaternary structure, monomer. Associates with the 60S ribosomal subunit. Interacts with RACK1. Interacts with DICER1, AGO2, TARBP2, MOV10 and RPL7A; they form a large RNA-induced silencing complex (RISC). Phosphorylation at Ser-174 and Ser-175 by CSNK1D/CK1 promotes nuclear export. In terms of processing, ufmylated by UFL1.

It localises to the cytoplasm. Its subcellular location is the nucleus. It is found in the nucleolus. Functionally, binds to the 60S ribosomal subunit and prevents its association with the 40S ribosomal subunit to form the 80S initiation complex in the cytoplasm. Behaves as a stimulatory translation initiation factor downstream insulin/growth factors. Is also involved in ribosome biogenesis. Associates with pre-60S subunits in the nucleus and is involved in its nuclear export. Cytoplasmic release of TIF6 from 60S subunits and nuclear relocalization is promoted by a RACK1 (RACK1)-dependent protein kinase C activity. In tissues responsive to insulin, controls fatty acid synthesis and glycolysis by exerting translational control of adipogenic transcription factors such as CEBPB, CEBPD and ATF4 that have G/C rich or uORF in their 5'UTR. Required for ROS-dependent megakaryocyte maturation and platelets formation, controls the expression of mitochondrial respiratory chain genes involved in reactive oxygen species (ROS) synthesis. Involved in miRNA-mediated gene silencing by the RNA-induced silencing complex (RISC). Required for both miRNA-mediated translational repression and miRNA-mediated cleavage of complementary mRNAs by RISC. Modulates cell cycle progression and global translation of pre-B cells, its activation seems to be rate-limiting in tumorigenesis and tumor growth. The chain is Eukaryotic translation initiation factor 6 from Bos taurus (Bovine).